The following is a 373-amino-acid chain: Protein MGF 360-6L (373 aa).

This sequence belongs to the asfivirus MGF 360 family.

Its function is as follows. Plays a role in virus cell tropism, and may be required for efficient virus replication in macrophages. The protein is Protein MGF 360-6L of Ornithodoros (relapsing fever ticks).